The primary structure comprises 1407 residues: E3 ubiquitin-protein ligase linker protein MMS1 (1407 aa).

The segment at 1-600 is required for interaction with MMS22; it reads MLGLRTHGLD…QFQIFRHLRI (600 aa). At Thr-1294 the chain carries Phosphothreonine.

In terms of assembly, component of multiple cullin-RING ligases (CRLs) composed of 4 subunits: the RING protein HRT1, the cullin RTT101, a linker protein MMS1, and one of many alternative substrate receptors belonging to a protein family described as DCAF (DDB1- and CUL4-associated factor). Component of a RTT101(MMS1-MMS22) complex with the substrate receptor MMS22. This complex further interacts with RTT107 and CTF4 to form RTT101-MMS1-MMS22-RTT107 and RTT101-MMS1-MMS22-CTF4 complexes respectively. Component of a RTT101(MSS1-CRT10) complex with the substrate receptor CRT10. Component of a RTT101(MSS1-ESC2) complex with the potential substrate receptor ESC2. Component of a RTT101(MSS1-ORC5) complex with the potential substrate receptor ORC5. Interacts with RTT101 (via N-ter). Interacts (via N-ter) with MMS22 (via C-ter). Interacts with CRT10.

The protein resides in the nucleus. Its function is as follows. Component of multiple cullin-RING-based E3 ubiquitin-protein ligase complexes (CRLs), which mediate the ubiquitination of target proteins. The CRL associates with CDC34 as the E2 ubiquitin-conjugating enzyme. The functional specificity of the CRL depends on the type of the associated substrate receptor protein. RTT101(MMS1-MMS22) promotes fork progression through damaged DNA or natural pause sites by stabilizing replication proteins like the replication fork-pausing complex (FPC) and leading-strand polymerase at stalled replication forks. RTT101(MMS1-MMS22) ubiquitinates the acetylated histones H3K56ac-H4 at lysine residues H3K121, H3K122 and H3K125. Ubiquitination is required for efficient histone deposition during replication-coupled nucleosome assembly, probably by facilitating the transfer of H3-H4 from ASF1 to other chaperones involved in histone deposition. RTT101(MMS1-CRT10) may regulate nucleotide synthesis through transcriptional regulation of ribonucleotide reductase. RTT101(MMS1) is also involved in the non-functional rRNA decay (NRD) of 25S rRNA through the selective, ubiquitination-dependent degradation of nonfunctional ribosomal particles. Involved in the regulation of TY1 transposition. This chain is E3 ubiquitin-protein ligase linker protein MMS1 (MMS1), found in Saccharomyces cerevisiae (strain ATCC 204508 / S288c) (Baker's yeast).